The primary structure comprises 854 residues: MDFSMVAGAAAYNEKSGRITSLSLLFQKVFAQIFPQWRKGNTEECLPYKCSETGALGENYSWQIPINHNDFKILKNNERQLCEVLQNKFGCISTLVSPVQEGNSKSLQVFRKMLTPRIELSVWKDDLTTHAVDAVVNAANEDLLHGGGLALALVKAGGFEIQEESKQFVARYGKVSAGEIAVTGAGRLPCKQIIHAVGPRWMEWDKQGCTGKLQRAIVSILNYVIYKNTHIKTVAIPALSSGIFQFPLNLCTKTIVETIRVSLQGKPMMSNLKEIHLVSNEDPTVAAFKAASEFILGKSELGQETTPSFNAMVVNNLTLQIVQGHIEWQTADVIVNSVNPHDITVGPVAKSILQQAGVEMKSEFLATKAKQFQRSQLVLVTKGFNLFCKYIYHVLWHSEFPKPQILKHAMKECLEKCIEQNITSISFPALGTGNMEIKKETAAEILFDEVLTFAKDHVKHQLTVKFVIFPTDLEIYKAFSSEMAKRSKMLSLNNYSVPQSTREEKRENGLEARSPAINLMGFNVEEMYEAHAWIQRILSLQNHHIIENNHILYLGRKEHDILSQLQKTSSVSITEIISPGRTELEIEGARADLIEVVMNIEDMLCKVQEEMARKKERGLWRSLGQWTIQQQKTQDEMKENIIFLKCPVPPTQELLDQKKQFEKCGLQVLKVEKIDNEVLMAAFQRKKKMMEEKLHRQPVSHRLFQQVPYQFCNVVCRVGFQRMYSTPCDPKYGAGIYFTKNLKNLAEKAKKISAADKLIYVFEAEVLTGFFCQGHPLNIVPPPLSPGAIDGHDSVVDNVSSPETFVIFSGMQAIPQYLWTCTQEYVQSQDYSSGPMRPFAQHPWRGFASGSPVD.

2 consecutive Macro domains span residues 107–296 (LQVF…EFIL) and 306–487 (TPSF…AKRS). Residues 628–850 (IQQQKTQDEM…QHPWRGFASG (223 aa)) enclose the PARP catalytic domain.

It belongs to the ARTD/PARP family. As to quaternary structure, forms a stable complex with E3 ligase DTX3L; the interaction is required for PARP9 mediated ADP-ribosylation of ubiquitin. Interacts (via PARP catalytic domain) with DTX3L (via N-terminus). Forms a complex with STAT1 and DTX3L independently of IFNB1 or IFNG-mediated STAT1 'Tyr-701' phosphorylation. Forms a complex with STAT1, DTX3L and histone H2B H2BC9/H2BJ; the interaction is likely to induce H2BC9/H2BJ ubiquitination. Interacts (via N-terminus) with STAT1. Interacts with PARP14 in IFNG-stimulated macrophages; the interaction prevents PARP14-mediated STAT1 and STAT6 ADP-riboslylation. Interacts with PARP1 (when poly-ADP-ribosylated). In terms of processing, ADP-ribosylated by PARP14. As to expression, expressed in lymphocyte-rich tissues, spleen, lymph nodes, peripheral blood lymphocytes and colonic mucosa. Expressed in macrophages. Also expressed in nonhematopoietic tissues such as heart and skeletal muscle. Isoform 2 is the predominant form. Most abundantly expressed in lymphomas with a brisk host inflammatory response. In diffuse large B-cell lymphomas tumors, expressed specifically by malignant B-cells.

Its subcellular location is the cytoplasm. It is found in the cytosol. The protein resides in the nucleus. The enzyme catalyses [protein]-C-terminal glycine + NAD(+) = [protein]-C-terminal O-(ADP-D-ribosyl)-glycine + nicotinamide. With respect to regulation, binding to poly(ADP-ribose) does not affect its activity. Its function is as follows. ADP-ribosyltransferase which, in association with E3 ligase DTX3L, plays a role in DNA damage repair and in immune responses including interferon-mediated antiviral defenses. Within the complex, enhances DTX3L E3 ligase activity which is further enhanced by PARP9 binding to poly(ADP-ribose). In association with DTX3L and in presence of E1 and E2 enzymes, mediates NAD(+)-dependent mono-ADP-ribosylation of ubiquitin which prevents ubiquitin conjugation to substrates such as histones. During DNA repair, PARP1 recruits PARP9/BAL1-DTX3L complex to DNA damage sites via PARP9 binding to ribosylated PARP1. Subsequent PARP1-dependent PARP9/BAL1-DTX3L-mediated ubiquitination promotes the rapid and specific recruitment of 53BP1/TP53BP1, UIMC1/RAP80, and BRCA1 to DNA damage sites. In response to DNA damage, PARP9-DTX3L complex is required for efficient non-homologous end joining (NHEJ); the complex function is negatively modulated by PARP9 activity. Dispensable for B-cell receptor (BCR) assembly through V(D)J recombination and class switch recombination (CSR). In macrophages, positively regulates pro-inflammatory cytokines production in response to IFNG stimulation by suppressing PARP14-mediated STAT1 ADP-ribosylation and thus promoting STAT1 phosphorylation. Also suppresses PARP14-mediated STAT6 ADP-ribosylation. The chain is Protein mono-ADP-ribosyltransferase PARP9 (PARP9) from Homo sapiens (Human).